Reading from the N-terminus, the 538-residue chain is Phosphoenolpyruvate carboxykinase (ATP) (538 aa).

Substrate-binding residues include Arg64, Tyr205, and Lys211. Residues Lys211, His230, and 246-254 (GLSGTGKTT) each bind ATP. Lys211 and His230 together coordinate Mn(2+). Asp267 lines the Mn(2+) pocket. ATP is bound by residues Glu295, Arg331, 447-448 (RI), and Thr453. Position 331 (Arg331) interacts with substrate.

Belongs to the phosphoenolpyruvate carboxykinase (ATP) family. Monomer. The cofactor is Mn(2+).

The protein resides in the cytoplasm. The catalysed reaction is oxaloacetate + ATP = phosphoenolpyruvate + ADP + CO2. Its pathway is carbohydrate biosynthesis; gluconeogenesis. Its function is as follows. Involved in the gluconeogenesis. Catalyzes the conversion of oxaloacetate (OAA) to phosphoenolpyruvate (PEP) through direct phosphoryl transfer between the nucleoside triphosphate and OAA. In Haemophilus influenzae (strain PittEE), this protein is Phosphoenolpyruvate carboxykinase (ATP).